The chain runs to 195 residues: 3-isopropylmalate dehydratase small subunit (195 aa).

The protein belongs to the LeuD family. LeuD type 1 subfamily. Heterodimer of LeuC and LeuD.

The enzyme catalyses (2R,3S)-3-isopropylmalate = (2S)-2-isopropylmalate. Its pathway is amino-acid biosynthesis; L-leucine biosynthesis; L-leucine from 3-methyl-2-oxobutanoate: step 2/4. In terms of biological role, catalyzes the isomerization between 2-isopropylmalate and 3-isopropylmalate, via the formation of 2-isopropylmaleate. This chain is 3-isopropylmalate dehydratase small subunit, found in Thermobifida fusca (strain YX).